A 450-amino-acid chain; its full sequence is Protein indeterminate-domain 13 (450 aa).

At S54 the chain carries Phosphoserine. 2 C2H2-type zinc fingers span residues 64–86 (FFCEICNKGFQREQNLQLHKRGH) and 106–136 (YICPEKSCVHHDPARALGDLTGIKKHFSRKH). A Nuclear localization signal motif is present at residues 128 to 135 (IKKHFSRK). The C2H2-type 2; degenerate zinc-finger motif lies at 141 to 165 (WKCDKCSKKYAVISDWKAHNKICGS). Residues C143, C146, H159, C163, C170, C172, H185, and C189 each contribute to the Zn(2+) site. The segment at 168 to 191 (FRCDCGTLFSRKDSFISHRSFCDV) adopts a CCHC-type 2; atypical zinc-finger fold. The SHR-binding stretch occupies residues 178–190 (RKDSFISHRSFCD). Over residues 248–263 (FGQKFTNSNPTQQQPN) the composition is skewed to polar residues. Residues 248 to 280 (FGQKFTNSNPTQQQPNALALSSPPSPRSTSDSV) form a disordered region.

The protein resides in the nucleus. Functionally, probable transcription factor. The polypeptide is Protein indeterminate-domain 13 (Arabidopsis thaliana (Mouse-ear cress)).